The primary structure comprises 459 residues: tRNA modification GTPase MnmE (459 aa).

Residues R22, E85, and R124 each contribute to the (6S)-5-formyl-5,6,7,8-tetrahydrofolate site. Residues 221 to 380 (GLSTVIVGKP…LEIQIRDLFF (160 aa)) enclose the TrmE-type G domain. N231 serves as a coordination point for K(+). Residues 231-236 (NVGKSS), 250-256 (TEVAGTT), and 275-278 (DTAG) contribute to the GTP site. S235 lines the Mg(2+) pocket. Residues T250, V252, and T255 each coordinate K(+). T256 contributes to the Mg(2+) binding site. Position 459 (K459) interacts with (6S)-5-formyl-5,6,7,8-tetrahydrofolate.

Belongs to the TRAFAC class TrmE-Era-EngA-EngB-Septin-like GTPase superfamily. TrmE GTPase family. As to quaternary structure, homodimer. Heterotetramer of two MnmE and two MnmG subunits. K(+) serves as cofactor.

It localises to the cytoplasm. In terms of biological role, exhibits a very high intrinsic GTPase hydrolysis rate. Involved in the addition of a carboxymethylaminomethyl (cmnm) group at the wobble position (U34) of certain tRNAs, forming tRNA-cmnm(5)s(2)U34. This is tRNA modification GTPase MnmE from Staphylococcus aureus (strain USA300 / TCH1516).